The chain runs to 286 residues: Isopentenyl-diphosphate Delta-isomerase II (286 aa).

Residues 104–256 enclose the Nudix hydrolase domain; sequence MLHRAFSVFL…GLKLSPWFRL (153 aa). Catalysis depends on residues cysteine 141 and glutamate 203.

It belongs to the IPP isomerase type 1 family.

The enzyme catalyses isopentenyl diphosphate = dimethylallyl diphosphate. It participates in isoprenoid biosynthesis; dimethylallyl diphosphate biosynthesis; dimethylallyl diphosphate from isopentenyl diphosphate: step 1/1. Its pathway is porphyrin-containing compound metabolism; chlorophyll biosynthesis. Its function is as follows. Catalyzes the 1,3-allylic rearrangement of the homoallylic substrate isopentenyl (IPP) to its highly electrophilic allylic isomer, dimethylallyl diphosphate (DMAPP). The sequence is that of Isopentenyl-diphosphate Delta-isomerase II (IPI2) from Clarkia breweri (Fairy fans).